A 43-amino-acid chain; its full sequence is Protein PsbN (43 aa).

A helical membrane pass occupies residues 7–27 (LSIGIAVVVIAVTGFSIYTAF).

It belongs to the PsbN family.

The protein resides in the cellular thylakoid membrane. May play a role in photosystem I and II biogenesis. This chain is Protein PsbN, found in Picosynechococcus sp. (strain ATCC 27264 / PCC 7002 / PR-6) (Agmenellum quadruplicatum).